We begin with the raw amino-acid sequence, 269 residues long: Protein TIFY 11B (269 aa).

A Tify domain is found at Pro100 to Glu135. Residues Pro160–Gln181 are disordered. The span at Glu164 to Gln181 shows a compositional bias: polar residues. The Jas signature appears at Ile186–Gln210. The short motif at Ala187–Arg194 is the Nuclear localization signal element. Residues Tyr209–Leu269 are disordered. Residues Met250–Leu269 are compositionally biased toward basic and acidic residues.

The protein belongs to the TIFY/JAZ family. Homo- and heterodimer. Interacts with MYC2, AFPH2/NINJA, TIFY10A/JAZ1, TIFY10B/JAZ2, TIFY11A/JAZ5, TIFY5A/JAZ8, TIFY9/JAZ10 and TIFY3B/JAZ12. In terms of assembly, (Microbial infection) Interacts with the pathogenic Pseudomonas syringae HopZ1a protein. In terms of processing, (Microbial infection) Acetylated by Pseudomonas syringae HopZ1a. Post-translationally, ubiquitinated. Targeted for degradation by the SCF(COI1) E3 ubiquitin ligase-proteasome pathway during jasmonate signaling.

Its subcellular location is the nucleus. It localises to the cell membrane. Repressor of jasmonate responses. This is Protein TIFY 11B from Arabidopsis thaliana (Mouse-ear cress).